We begin with the raw amino-acid sequence, 335 residues long: Glyceraldehyde-3-phosphate dehydrogenase (335 aa).

NAD(+)-binding positions include 12 to 13 (RI), D34, R78, and S120. Residues 151 to 153 (SCT) and T182 each bind D-glyceraldehyde 3-phosphate. C152 functions as the Nucleophile in the catalytic mechanism. An NAD(+)-binding site is contributed by N183. Residues R197, 210 to 211 (TG), and R233 contribute to the D-glyceraldehyde 3-phosphate site. N315 provides a ligand contact to NAD(+).

This sequence belongs to the glyceraldehyde-3-phosphate dehydrogenase family. Homotetramer.

It is found in the cytoplasm. It catalyses the reaction D-glyceraldehyde 3-phosphate + phosphate + NAD(+) = (2R)-3-phospho-glyceroyl phosphate + NADH + H(+). It functions in the pathway carbohydrate degradation; glycolysis; pyruvate from D-glyceraldehyde 3-phosphate: step 1/5. Its function is as follows. Catalyzes the oxidative phosphorylation of glyceraldehyde 3-phosphate (G3P) to 1,3-bisphosphoglycerate (BPG) using the cofactor NAD. The first reaction step involves the formation of a hemiacetal intermediate between G3P and a cysteine residue, and this hemiacetal intermediate is then oxidized to a thioester, with concomitant reduction of NAD to NADH. The reduced NADH is then exchanged with the second NAD, and the thioester is attacked by a nucleophilic inorganic phosphate to produce BPG. This chain is Glyceraldehyde-3-phosphate dehydrogenase (gap), found in Geobacillus stearothermophilus (Bacillus stearothermophilus).